We begin with the raw amino-acid sequence, 642 residues long: Pentatricopeptide repeat-containing protein At3g16010 (642 aa).

PPR repeat units follow at residues 125–159 (DCST…TYVS), 161–195 (SPAV…KCKP), 196–230 (TSST…GDCF), 232–266 (DTIT…CMQP), 267–301 (TEKI…GCSP), 302–336 (TVYT…GLTP), 337–371 (DVVF…RCTP), 372–407 (TVVS…SVSP), 408–442 (SEFT…GFPP), 443–473 (CPAA…LKEN), 478–512 (SSRV…GSGP), 513–547 (DVYA…GCRA), 548–582 (DINS…GIKP), and 583–617 (DGVT…GFEY).

Belongs to the PPR family. P subfamily.

The sequence is that of Pentatricopeptide repeat-containing protein At3g16010 from Arabidopsis thaliana (Mouse-ear cress).